We begin with the raw amino-acid sequence, 343 residues long: Endoplasmic reticulum-resident calcium binding protein (343 aa).

A signal peptide spans 1–26; it reads MMKINLYKLLCFICVIFLLHKNVVRS. EF-hand domains are found at residues 59-94, 95-130, 135-170, 172-207, and 210-245; these read GAKE…LKNE, IFLK…NLDA, KHSE…MKDE, LKEL…ESSG, and KDDE…PAHE. Ca(2+)-binding residues include Asp72, Asn74, Asp76, Glu78, Glu83, Asp108, Asp110, Asp112, Glu119, Asp148, Asp150, Asp152, Lys154, Glu159, Asp185, Asn187, Asp189, Lys191, Glu196, Asp223, Asn225, Asp227, and Glu234. Positions 313 to 331 are enriched in acidic residues; that stretch reads EDDDMDADNTEDDKDEADD. Residues 313-343 are disordered; the sequence is EDDDMDADNTEDDKDEADDASQQKSPAIDEL.

This sequence belongs to the CREC family.

The protein resides in the endoplasmic reticulum. Functionally, calcium-binding protein. Required for schizont to ring transition. Required for the breakdown of the parasitophorous vacuole membrane during egress. Required for the proteolytic maturation of apical membrane antigen 1 (AMA-1) during egress. Required for the proteolytic maturation of subtilisin-like protease 1 (SUB1) during egress. Required for the proteolytic maturation of plasmepsin X (PMX) during egress. The protein is Endoplasmic reticulum-resident calcium binding protein of Plasmodium falciparum (isolate 3D7).